The primary structure comprises 161 residues: Ribonuclease P protein component (161 aa).

The segment at 1 to 20 (MPDELRAEKSFPSKPYDSLK) is disordered.

The protein belongs to the RnpA family. Consists of a catalytic RNA component (M1 or rnpB) and a protein subunit.

It carries out the reaction Endonucleolytic cleavage of RNA, removing 5'-extranucleotides from tRNA precursor.. RNaseP catalyzes the removal of the 5'-leader sequence from pre-tRNA to produce the mature 5'-terminus. It can also cleave other RNA substrates such as 4.5S RNA. The protein component plays an auxiliary but essential role in vivo by binding to the 5'-leader sequence and broadening the substrate specificity of the ribozyme. In Helicobacter pylori (strain P12), this protein is Ribonuclease P protein component.